A 251-amino-acid polypeptide reads, in one-letter code: Pyruvate formate-lyase-activating enzyme (251 aa).

In terms of domain architecture, Radical SAM core spans 15–244 (VDGPGLRYIL…KAAYRYVNFK (230 aa)). [4Fe-4S] cluster contacts are provided by Cys-29, Cys-33, and Cys-36. Residues 35-37 (YCH), Gly-79, 134-136 (DIK), and His-207 contribute to the S-adenosyl-L-methionine site.

Belongs to the organic radical-activating enzymes family. [4Fe-4S] cluster serves as cofactor.

Its subcellular location is the cytoplasm. It catalyses the reaction glycyl-[formate C-acetyltransferase] + reduced [flavodoxin] + S-adenosyl-L-methionine = glycin-2-yl radical-[formate C-acetyltransferase] + semiquinone [flavodoxin] + 5'-deoxyadenosine + L-methionine + H(+). Its function is as follows. Activation of pyruvate formate-lyase under anaerobic conditions by generation of an organic free radical, using S-adenosylmethionine and reduced flavodoxin as cosubstrates to produce 5'-deoxy-adenosine. In Staphylococcus aureus (strain N315), this protein is Pyruvate formate-lyase-activating enzyme (pflA).